The following is a 120-amino-acid chain: MLRFTDEHEWLRLDGDVATVGITAHAAEQLGDLVFVELPKVGVKLTKGEAAAVVESVKAASDVYAPLSGEVTEVNEAALSDPASVGADPQGAGWLYRLKLDDVSAMDALMDEAAYADFAK.

Residues 17 to 99 (VATVGITAHA…QGAGWLYRLK (83 aa)) enclose the Lipoyl-binding domain. Position 58 is an N6-lipoyllysine (Lys58).

The protein belongs to the GcvH family. The glycine cleavage system is composed of four proteins: P, T, L and H. Requires (R)-lipoate as cofactor.

In terms of biological role, the glycine cleavage system catalyzes the degradation of glycine. The H protein shuttles the methylamine group of glycine from the P protein to the T protein. The sequence is that of Glycine cleavage system H protein from Methylorubrum populi (strain ATCC BAA-705 / NCIMB 13946 / BJ001) (Methylobacterium populi).